The primary structure comprises 367 residues: Peptide chain release factor 2 (367 aa).

N5-methylglutamine is present on Gln-249.

The protein belongs to the prokaryotic/mitochondrial release factor family. Post-translationally, methylated by PrmC. Methylation increases the termination efficiency of RF2.

Its subcellular location is the cytoplasm. Functionally, peptide chain release factor 2 directs the termination of translation in response to the peptide chain termination codons UGA and UAA. The protein is Peptide chain release factor 2 of Pseudothermotoga lettingae (strain ATCC BAA-301 / DSM 14385 / NBRC 107922 / TMO) (Thermotoga lettingae).